Reading from the N-terminus, the 358-residue chain is Putative glycylpeptide N-tetradecanoyltransferase (358 aa).

The protein belongs to the NMT family.

It carries out the reaction N-terminal glycyl-[protein] + tetradecanoyl-CoA = N-tetradecanoylglycyl-[protein] + CoA + H(+). Its function is as follows. Adds a myristoyl group to the N-terminal glycine residue of certain proteins. This chain is Putative glycylpeptide N-tetradecanoyltransferase, found in Acanthamoeba polyphaga (Amoeba).